The sequence spans 271 residues: Type III pantothenate kinase (271 aa).

6–13 (DVRNTNIV) is an ATP binding site. 109-112 (GADR) is a binding site for substrate. Catalysis depends on Asp111, which acts as the Proton acceptor. Asp131 contributes to the K(+) binding site. Thr134 is a binding site for ATP. Position 186 (Thr186) interacts with substrate.

Belongs to the type III pantothenate kinase family. In terms of assembly, homodimer. NH4(+) is required as a cofactor. It depends on K(+) as a cofactor.

The protein resides in the cytoplasm. The enzyme catalyses (R)-pantothenate + ATP = (R)-4'-phosphopantothenate + ADP + H(+). The protein operates within cofactor biosynthesis; coenzyme A biosynthesis; CoA from (R)-pantothenate: step 1/5. Functionally, catalyzes the phosphorylation of pantothenate (Pan), the first step in CoA biosynthesis. This chain is Type III pantothenate kinase, found in Rhodococcus jostii (strain RHA1).